A 103-amino-acid polypeptide reads, in one-letter code: Large ribosomal subunit protein mL41 (103 aa).

It belongs to the mitochondrion-specific ribosomal protein mL41 family. As to quaternary structure, component of the mitochondrial large ribosomal subunit (mt-LSU). Mature N.crassa 74S mitochondrial ribosomes consist of a small (37S) and a large (54S) subunit. The 37S small subunit contains a 16S ribosomal RNA (16S mt-rRNA) and 32 different proteins. The 54S large subunit contains a 23S rRNA (23S mt-rRNA) and 42 different proteins.

It is found in the mitochondrion. Its function is as follows. Component of the mitochondrial ribosome (mitoribosome), a dedicated translation machinery responsible for the synthesis of mitochondrial genome-encoded proteins, including at least some of the essential transmembrane subunits of the mitochondrial respiratory chain. The mitoribosomes are attached to the mitochondrial inner membrane and translation products are cotranslationally integrated into the membrane. This is Large ribosomal subunit protein mL41 (mrpl27) from Neurospora crassa (strain ATCC 24698 / 74-OR23-1A / CBS 708.71 / DSM 1257 / FGSC 987).